The sequence spans 186 residues: Ribosome-recycling factor (186 aa).

Belongs to the RRF family.

It is found in the cytoplasm. Its function is as follows. Responsible for the release of ribosomes from messenger RNA at the termination of protein biosynthesis. May increase the efficiency of translation by recycling ribosomes from one round of translation to another. This is Ribosome-recycling factor from Rickettsia peacockii (strain Rustic).